We begin with the raw amino-acid sequence, 303 residues long: N-acetyl-D-glucosamine kinase (303 aa).

ATP contacts are provided by residues Gly4–Lys11 and Gly133–Phe140. The Zn(2+) site is built by His157, Cys177, Cys179, and Cys184.

It belongs to the ROK (NagC/XylR) family. NagK subfamily.

It carries out the reaction N-acetyl-D-glucosamine + ATP = N-acetyl-D-glucosamine 6-phosphate + ADP + H(+). Its pathway is cell wall biogenesis; peptidoglycan recycling. In terms of biological role, catalyzes the phosphorylation of N-acetyl-D-glucosamine (GlcNAc) derived from cell-wall degradation, yielding GlcNAc-6-P. This Escherichia coli O81 (strain ED1a) protein is N-acetyl-D-glucosamine kinase.